Reading from the N-terminus, the 247-residue chain is Carboxy-S-adenosyl-L-methionine synthase (247 aa).

S-adenosyl-L-methionine contacts are provided by residues tyrosine 39, 64–66, 89–90, 117–118, asparagine 132, and arginine 199; these read GCS, DN, and DI.

Belongs to the class I-like SAM-binding methyltransferase superfamily. Cx-SAM synthase family. As to quaternary structure, homodimer.

The catalysed reaction is prephenate + S-adenosyl-L-methionine = carboxy-S-adenosyl-L-methionine + 3-phenylpyruvate + H2O. Catalyzes the conversion of S-adenosyl-L-methionine (SAM) to carboxy-S-adenosyl-L-methionine (Cx-SAM). The sequence is that of Carboxy-S-adenosyl-L-methionine synthase from Cronobacter sakazakii (strain ATCC BAA-894) (Enterobacter sakazakii).